The chain runs to 212 residues: Thiamine-phosphate synthase (212 aa).

Residues 40-44 (QFREK) and asparagine 75 each bind 4-amino-2-methyl-5-(diphosphooxymethyl)pyrimidine. 2 residues coordinate Mg(2+): aspartate 76 and aspartate 95. Serine 113 serves as a coordination point for 4-amino-2-methyl-5-(diphosphooxymethyl)pyrimidine. 139–141 (TIS) provides a ligand contact to 2-[(2R,5Z)-2-carboxy-4-methylthiazol-5(2H)-ylidene]ethyl phosphate. 4-amino-2-methyl-5-(diphosphooxymethyl)pyrimidine is bound at residue lysine 142. 2-[(2R,5Z)-2-carboxy-4-methylthiazol-5(2H)-ylidene]ethyl phosphate-binding positions include glycine 171 and 191–192 (IS).

It belongs to the thiamine-phosphate synthase family. The cofactor is Mg(2+).

The catalysed reaction is 2-[(2R,5Z)-2-carboxy-4-methylthiazol-5(2H)-ylidene]ethyl phosphate + 4-amino-2-methyl-5-(diphosphooxymethyl)pyrimidine + 2 H(+) = thiamine phosphate + CO2 + diphosphate. It carries out the reaction 2-(2-carboxy-4-methylthiazol-5-yl)ethyl phosphate + 4-amino-2-methyl-5-(diphosphooxymethyl)pyrimidine + 2 H(+) = thiamine phosphate + CO2 + diphosphate. It catalyses the reaction 4-methyl-5-(2-phosphooxyethyl)-thiazole + 4-amino-2-methyl-5-(diphosphooxymethyl)pyrimidine + H(+) = thiamine phosphate + diphosphate. It participates in cofactor biosynthesis; thiamine diphosphate biosynthesis; thiamine phosphate from 4-amino-2-methyl-5-diphosphomethylpyrimidine and 4-methyl-5-(2-phosphoethyl)-thiazole: step 1/1. Its function is as follows. Condenses 4-methyl-5-(beta-hydroxyethyl)thiazole monophosphate (THZ-P) and 2-methyl-4-amino-5-hydroxymethyl pyrimidine pyrophosphate (HMP-PP) to form thiamine monophosphate (TMP). The protein is Thiamine-phosphate synthase of Staphylococcus haemolyticus (strain JCSC1435).